Reading from the N-terminus, the 577-residue chain is Outer spore wall assembly protein SHE10 (577 aa).

A signal peptide spans 1 to 23 (MGKLIKLITTLTVLVSLLQYCCE). Coiled coils occupy residues 379-416 (NETRSTLDELTNAMEKDLSEITDEIEKKVNAIREENVE) and 513-561 (ILRS…EEDV). A compositionally biased stretch (basic and acidic residues) spans 525–545 (RERKERERKEREKAAAEEFQR). Residues 525-577 (RERKERERKEREKAAAEEFQRQQELLRQQEEEDEEDVSYTSTSTITTTTTMTL) form a disordered region. A compositionally biased stretch (low complexity) spans 562–577 (SYTSTSTITTTTTMTL).

The protein belongs to the SHE10 family. In terms of assembly, component of the mitochondria-localized RNase mitochondrial RNA-processing (RNase MRP) composed of one single RNA encoded by the NME1 gene and at least 31 proteins. Absent in the nucleus-localized RNase MRP (NuMRP).

It localises to the mitochondrion. Its function is as follows. Involved in spore wall assembly. May be a component of the mitochondrial RNase MRP (MtMRP), a ribonucleoprotein endoribonuclease involved in the cleaving RNA transcripts to generate primers for DNA replication in mitochondria. This is Outer spore wall assembly protein SHE10 from Saccharomyces cerevisiae (strain YJM789) (Baker's yeast).